Here is a 223-residue protein sequence, read N- to C-terminus: Putative UPF0607 protein LOC392364 (223 aa).

A compositionally biased stretch (basic and acidic residues) spans K110 to R138. The interval K110–G223 is disordered. 2 stretches are compositionally biased toward polar residues: residues E145 to R163 and Q174 to K186.

The protein belongs to the UPF0607 family.

This Homo sapiens (Human) protein is Putative UPF0607 protein LOC392364.